Here is a 264-residue protein sequence, read N- to C-terminus: tRNA pseudouridine synthase A (264 aa).

Aspartate 54 serves as the catalytic Nucleophile. Substrate is bound at residue tyrosine 113.

It belongs to the tRNA pseudouridine synthase TruA family. Homodimer.

It carries out the reaction uridine(38/39/40) in tRNA = pseudouridine(38/39/40) in tRNA. Formation of pseudouridine at positions 38, 39 and 40 in the anticodon stem and loop of transfer RNAs. This is tRNA pseudouridine synthase A from Leptospira biflexa serovar Patoc (strain Patoc 1 / Ames).